Reading from the N-terminus, the 282-residue chain is Pantothenate synthetase (282 aa).

An ATP-binding site is contributed by 26–33 (MGNLHEGH). Histidine 33 acts as the Proton donor in catalysis. A (R)-pantoate-binding site is contributed by glutamine 57. Glutamine 57 lines the beta-alanine pocket. ATP is bound at residue 144–147 (GKKD). Glutamine 150 is a (R)-pantoate binding site. ATP-binding positions include isoleucine 173 and 181-184 (LSSR).

Belongs to the pantothenate synthetase family. In terms of assembly, homodimer.

The protein resides in the cytoplasm. The catalysed reaction is (R)-pantoate + beta-alanine + ATP = (R)-pantothenate + AMP + diphosphate + H(+). Its pathway is cofactor biosynthesis; (R)-pantothenate biosynthesis; (R)-pantothenate from (R)-pantoate and beta-alanine: step 1/1. Its function is as follows. Catalyzes the condensation of pantoate with beta-alanine in an ATP-dependent reaction via a pantoyl-adenylate intermediate. The polypeptide is Pantothenate synthetase (Cupriavidus necator (strain ATCC 17699 / DSM 428 / KCTC 22496 / NCIMB 10442 / H16 / Stanier 337) (Ralstonia eutropha)).